A 135-amino-acid chain; its full sequence is uncharacterized protein (135 aa).

The segment at Val-56–Val-135 is disordered. The span at Asn-64–Gln-74 shows a compositional bias: basic residues. Polar residues predominate over residues Ser-77–Glu-89. The segment covering Tyr-108–Val-135 has biased composition (basic and acidic residues).

This is an uncharacterized protein from Schizosaccharomyces pombe (strain 972 / ATCC 24843) (Fission yeast).